The chain runs to 266 residues: Large ribosomal subunit protein eL8 (266 aa).

Residues 1–11 (MPKGKKAKGKK) are compositionally biased toward basic residues. Disordered regions lie at residues 1–28 (MPKGKKAKGKKVAPAPSVAKKHEAKKVV) and 105–134 (ETKQEKKKRLLARAEQKAAGKGDAPTKRPP). Residues 116–130 (ARAEQKAAGKGDAPT) are compositionally biased toward basic and acidic residues.

The protein belongs to the eukaryotic ribosomal protein eL8 family. In terms of assembly, component of the large ribosomal subunit.

It localises to the cytoplasm. In terms of biological role, component of the large ribosomal subunit. The ribosome is a large ribonucleoprotein complex responsible for the synthesis of proteins in the cell. In Takifugu rubripes (Japanese pufferfish), this protein is Large ribosomal subunit protein eL8 (rpl7a).